A 149-amino-acid polypeptide reads, in one-letter code: Calmodulin (149 aa).

Ala-2 bears the N-acetylalanine mark. 4 consecutive EF-hand domains span residues 8-43, 44-79, 81-116, and 117-149; these read EQIA…LGQN, PTEA…KMKD, DSEE…LGEK, and LTDE…MTAK. Positions 21, 23, 25, 27, 32, 59, 61, 63, 68, 94, 96, 98, 100, and 105 each coordinate Ca(2+). Lys-116 is modified (N6,N6,N6-trimethyllysine). The Ca(2+) site is built by Asp-130, Asp-132, Asp-134, Gln-136, and Glu-141.

The protein belongs to the calmodulin family.

Calmodulin acts as part of a calcium signal transduction pathway by mediating the control of a large number of enzymes, ion channels, aquaporins and other proteins through calcium-binding. Calcium-binding is required for the activation of calmodulin. Among the enzymes to be stimulated by the calmodulin-calcium complex are a number of protein kinases, such as myosin light-chain kinases and calmodulin-dependent protein kinase type II (CaMK2), and phosphatases. The protein is Calmodulin of Myxine glutinosa (Atlantic hagfish).